The primary structure comprises 300 residues: UDP-N-acetylenolpyruvoylglucosamine reductase (300 aa).

The FAD-binding PCMH-type domain occupies 28–193 (KTGGPADWLA…LDATFALKLG (166 aa)). Arg-172 is a catalytic residue. Residue Ser-222 is the Proton donor of the active site. Glu-292 is an active-site residue.

The protein belongs to the MurB family. Requires FAD as cofactor.

The protein localises to the cytoplasm. It catalyses the reaction UDP-N-acetyl-alpha-D-muramate + NADP(+) = UDP-N-acetyl-3-O-(1-carboxyvinyl)-alpha-D-glucosamine + NADPH + H(+). The protein operates within cell wall biogenesis; peptidoglycan biosynthesis. In terms of biological role, cell wall formation. This chain is UDP-N-acetylenolpyruvoylglucosamine reductase, found in Limosilactobacillus fermentum (strain NBRC 3956 / LMG 18251) (Lactobacillus fermentum).